Consider the following 432-residue polypeptide: 3-phosphoshikimate 1-carboxyvinyltransferase (432 aa).

Lys-23, Ser-24, and Arg-28 together coordinate 3-phosphoshikimate. Position 23 (Lys-23) interacts with phosphoenolpyruvate. Gly-95 and Arg-123 together coordinate phosphoenolpyruvate. Residues Ser-167, Gln-169, Asp-317, and Lys-344 each coordinate 3-phosphoshikimate. Phosphoenolpyruvate is bound at residue Gln-169. Asp-317 serves as the catalytic Proton acceptor. Phosphoenolpyruvate-binding residues include Arg-348 and Arg-390.

Belongs to the EPSP synthase family. In terms of assembly, monomer.

It localises to the cytoplasm. The catalysed reaction is 3-phosphoshikimate + phosphoenolpyruvate = 5-O-(1-carboxyvinyl)-3-phosphoshikimate + phosphate. It functions in the pathway metabolic intermediate biosynthesis; chorismate biosynthesis; chorismate from D-erythrose 4-phosphate and phosphoenolpyruvate: step 6/7. In terms of biological role, catalyzes the transfer of the enolpyruvyl moiety of phosphoenolpyruvate (PEP) to the 5-hydroxyl of shikimate-3-phosphate (S3P) to produce enolpyruvyl shikimate-3-phosphate and inorganic phosphate. This chain is 3-phosphoshikimate 1-carboxyvinyltransferase, found in Staphylococcus haemolyticus (strain JCSC1435).